Reading from the N-terminus, the 398-residue chain is Carboxyaminopropylagmatine dehydrogenase (398 aa).

Belongs to the saccharopine dehydrogenase family.

The enzyme catalyses N(1)-[(S)-3-amino-3-carboxypropyl]agmatine + NADP(+) + H2O = L-aspartate 4-semialdehyde + agmatine + NADPH + H(+). The protein operates within amine and polyamine biosynthesis; spermidine biosynthesis. Functionally, dehydrogenase involved in the biosynthesis of spermidine via the carboxyaminopropylagmatine (CAPA) pathway. Catalyzes the reductive condensation of agmatine and L-aspartate-beta-semialdehyde (ASA) into CAPA. Shows activity toward putrescine and 1,3-diaminopropane, but the catalytic efficiency is three to four orders of magnitude lower than that for agmatine. Cannot use cadaverine or spermidine. The chain is Carboxyaminopropylagmatine dehydrogenase from Synechocystis sp. (strain ATCC 27184 / PCC 6803 / Kazusa).